The chain runs to 133 residues: Mediator of RNA polymerase II transcription subunit 10 (133 aa).

Residues 1-13 (MSTEASTGETPEF) are compositionally biased toward polar residues. Residues 1-28 (MSTEASTGETPEFQSYDHRGSPTQEAMK) form a disordered region. The segment covering 15 to 28 (SYDHRGSPTQEAMK) has biased composition (basic and acidic residues).

It belongs to the Mediator complex subunit 10 family. In terms of assembly, component of the Mediator complex.

Its subcellular location is the nucleus. In terms of biological role, component of the Mediator complex, a coactivator involved in the regulated transcription of nearly all RNA polymerase II-dependent genes. Mediator functions as a bridge to convey information from gene-specific regulatory proteins to the basal RNA polymerase II transcription machinery. Mediator is recruited to promoters by direct interactions with regulatory proteins and serves as a scaffold for the assembly of a functional preinitiation complex with RNA polymerase II and the general transcription factors. This is Mediator of RNA polymerase II transcription subunit 10 (NUT2) from Phaeosphaeria nodorum (strain SN15 / ATCC MYA-4574 / FGSC 10173) (Glume blotch fungus).